The following is a 324-amino-acid chain: NAD kinase (324 aa).

D89 serves as the catalytic Proton acceptor. NAD(+) is bound by residues 89–90 (DG), R94, 163–164 (NE), D193, and 204–209 (TAYAFS).

This sequence belongs to the NAD kinase family. It depends on a divalent metal cation as a cofactor.

It localises to the cytoplasm. The catalysed reaction is NAD(+) + ATP = ADP + NADP(+) + H(+). Involved in the regulation of the intracellular balance of NAD and NADP, and is a key enzyme in the biosynthesis of NADP. Catalyzes specifically the phosphorylation on 2'-hydroxyl of the adenosine moiety of NAD to yield NADP. This is NAD kinase from Nocardia farcinica (strain IFM 10152).